We begin with the raw amino-acid sequence, 119 residues long: Ribonuclease P protein component (119 aa).

It belongs to the RnpA family. Consists of a catalytic RNA component (M1 or rnpB) and a protein subunit.

The catalysed reaction is Endonucleolytic cleavage of RNA, removing 5'-extranucleotides from tRNA precursor.. Functionally, RNaseP catalyzes the removal of the 5'-leader sequence from pre-tRNA to produce the mature 5'-terminus. It can also cleave other RNA substrates such as 4.5S RNA. The protein component plays an auxiliary but essential role in vivo by binding to the 5'-leader sequence and broadening the substrate specificity of the ribozyme. In Listeria innocua serovar 6a (strain ATCC BAA-680 / CLIP 11262), this protein is Ribonuclease P protein component.